A 284-amino-acid polypeptide reads, in one-letter code: Mediator of RNA polymerase II transcription subunit 4 (284 aa).

Serine 2 is subject to N-acetylserine. Residues 205-284 are disordered; that stretch reads RIPGEEVEET…DLDLFDPDDF (80 aa). A compositionally biased stretch (basic and acidic residues) spans 225–238; it reads EEQKGQMAKKEGTP. A Phosphothreonine; by KIN28 modification is found at threonine 237. A Phosphoserine modification is found at serine 242. Basic and acidic residues predominate over residues 248–265; sequence TAKEVGDEADNTKDKEKE. Over residues 266–284 the composition is skewed to acidic residues; that stretch reads ENNDDALDLDLDLFDPDDF.

It belongs to the Mediator complex subunit 4 family. Component of the Mediator complex, which is composed of at least 21 subunits that form three structurally distinct submodules. The Mediator head module contains MED6, MED8, MED11, SRB4/MED17, SRB5/MED18, ROX3/MED19, SRB2/MED20 and SRB6/MED22, the middle module contains MED1, MED4, NUT1/MED5, MED7, CSE2/MED9, NUT2/MED10, SRB7/MED21 and SOH1/MED31, and the tail module contains MED2, PGD1/MED3, RGR1/MED14, GAL11/MED15 and SIN4/MED16. The head and the middle modules interact directly with RNA polymerase II, whereas the elongated tail module interacts with gene-specific regulatory proteins. MED4 interacts directly with MED1, MED7 and SRB7/MED21.

The protein resides in the nucleus. Its function is as follows. Component of the Mediator complex, a coactivator involved in the regulated transcription of nearly all RNA polymerase II-dependent genes. Mediator functions as a bridge to convey information from gene-specific regulatory proteins to the basal RNA polymerase II transcription machinery. The Mediator complex, having a compact conformation in its free form, is recruited to promoters by direct interactions with regulatory proteins and serves for the assembly of a functional preinitiation complex with RNA polymerase II and the general transcription factors. The Mediator complex unfolds to an extended conformation and partially surrounds RNA polymerase II, specifically interacting with the unphosphorylated form of the C-terminal domain (CTD) of RNA polymerase II. The Mediator complex dissociates from the RNA polymerase II holoenzyme and stays at the promoter when transcriptional elongation begins. This is Mediator of RNA polymerase II transcription subunit 4 (MED4) from Saccharomyces cerevisiae (strain ATCC 204508 / S288c) (Baker's yeast).